A 713-amino-acid polypeptide reads, in one-letter code: Glycine--tRNA ligase beta subunit (713 aa).

This sequence belongs to the class-II aminoacyl-tRNA synthetase family. In terms of assembly, tetramer of two alpha and two beta subunits.

The protein localises to the cytoplasm. It carries out the reaction tRNA(Gly) + glycine + ATP = glycyl-tRNA(Gly) + AMP + diphosphate. The sequence is that of Glycine--tRNA ligase beta subunit from Leptothrix cholodnii (strain ATCC 51168 / LMG 8142 / SP-6) (Leptothrix discophora (strain SP-6)).